The primary structure comprises 216 residues: Large ribosomal subunit protein uL3 (216 aa).

Q157 is modified (N5-methylglutamine).

The protein belongs to the universal ribosomal protein uL3 family. In terms of assembly, part of the 50S ribosomal subunit. Forms a cluster with proteins L14 and L19. In terms of processing, methylated by PrmB.

Functionally, one of the primary rRNA binding proteins, it binds directly near the 3'-end of the 23S rRNA, where it nucleates assembly of the 50S subunit. The polypeptide is Large ribosomal subunit protein uL3 (Xanthomonas oryzae pv. oryzae (strain MAFF 311018)).